Here is a 313-residue protein sequence, read N- to C-terminus: Porphobilinogen deaminase (313 aa).

Cys242 is subject to S-(dipyrrolylmethanemethyl)cysteine.

Belongs to the HMBS family. As to quaternary structure, monomer. Requires dipyrromethane as cofactor.

It carries out the reaction 4 porphobilinogen + H2O = hydroxymethylbilane + 4 NH4(+). It functions in the pathway porphyrin-containing compound metabolism; protoporphyrin-IX biosynthesis; coproporphyrinogen-III from 5-aminolevulinate: step 2/4. In terms of biological role, tetrapolymerization of the monopyrrole PBG into the hydroxymethylbilane pre-uroporphyrinogen in several discrete steps. The polypeptide is Porphobilinogen deaminase (Escherichia coli O45:K1 (strain S88 / ExPEC)).